The chain runs to 180 residues: Putative 3-methyladenine DNA glycosylase (180 aa).

Belongs to the DNA glycosylase MPG family.

The sequence is that of Putative 3-methyladenine DNA glycosylase from Wolbachia pipientis wMel.